The primary structure comprises 276 residues: Large ribosomal subunit protein uL2 (276 aa).

A disordered region spans residues 224-265 (VMNPVDHPHGGGEGRTASGRHPVSPWGLPTKGYKTRNNKRTD).

The protein belongs to the universal ribosomal protein uL2 family. Part of the 50S ribosomal subunit. Forms a bridge to the 30S subunit in the 70S ribosome.

Its function is as follows. One of the primary rRNA binding proteins. Required for association of the 30S and 50S subunits to form the 70S ribosome, for tRNA binding and peptide bond formation. It has been suggested to have peptidyltransferase activity; this is somewhat controversial. Makes several contacts with the 16S rRNA in the 70S ribosome. This Dichelobacter nodosus (strain VCS1703A) protein is Large ribosomal subunit protein uL2.